The chain runs to 576 residues: Pentatricopeptide repeat-containing protein At1g79080, chloroplastic (576 aa).

The N-terminal 37 residues, 1–37 (MSTLLNSVLSMASPESSPRKAVGFVSHIPSGFLHFSS), are a transit peptide targeting the chloroplast. PPR repeat units lie at residues 105 to 139 (NVAHSTQLLYDLCKANRLKKAIRVIELMVSSGIIP), 140 to 174 (DASAYTYLVNQLCKRGNVGYAMQLVEKMEDHGYPS), 175 to 209 (NTVTYNALVRGLCMLGSLNQSLQFVERLMQKGLAP), 210 to 244 (NAFTYSFLLEAAYKERGTDEAVKLLDEIIVKGGEP), 245 to 279 (NLVSYNVLLTGFCKEGRTDDAMALFRELPAKGFKA), 280 to 314 (NVVSYNILLRCLCCDGRWEEANSLLAEMDGGDRAP), 315 to 349 (SVVTYNILINSLAFHGRTEQALQVLKEMSKGNHQF), 352 to 386 (TATSYNPVIARLCKEGKVDLVVKCLDEMIYRRCKP), 387 to 417 (NEGTYNAIGSLCEHNSKVQEAFYIIQSLSNK), 422 to 456 (THDFYKSVITSLCRKGNTFAAFQLLYEMTRCGFDP), 457 to 487 (DAHTYSALIRGLCLEGMFTGAMEVLSIMEES), 493 to 527 (TVDNFNAMILGLCKIRRTDLAMEVFEMMVEKKRMP), and 528 to 562 (NETTYAILVEGIAHEDELELAKEVLDELRLRKVIG).

It belongs to the PPR family. P subfamily.

It is found in the plastid. It localises to the chloroplast. This Arabidopsis thaliana (Mouse-ear cress) protein is Pentatricopeptide repeat-containing protein At1g79080, chloroplastic.